We begin with the raw amino-acid sequence, 344 residues long: N-acetyl-gamma-glutamyl-phosphate reductase (344 aa).

The active site involves C150.

Belongs to the NAGSA dehydrogenase family. Type 1 subfamily.

Its subcellular location is the cytoplasm. It catalyses the reaction N-acetyl-L-glutamate 5-semialdehyde + phosphate + NADP(+) = N-acetyl-L-glutamyl 5-phosphate + NADPH + H(+). It functions in the pathway amino-acid biosynthesis; L-arginine biosynthesis; N(2)-acetyl-L-ornithine from L-glutamate: step 3/4. Catalyzes the NADPH-dependent reduction of N-acetyl-5-glutamyl phosphate to yield N-acetyl-L-glutamate 5-semialdehyde. This chain is N-acetyl-gamma-glutamyl-phosphate reductase, found in Ectopseudomonas mendocina (strain ymp) (Pseudomonas mendocina).